Here is a 277-residue protein sequence, read N- to C-terminus: Shikimate dehydrogenase (NADP(+)) (277 aa).

Residues 18 to 20 and threonine 65 each bind shikimate; that span reads SKS. Catalysis depends on lysine 69, which acts as the Proton acceptor. Residue glutamate 81 participates in NADP(+) binding. Residues asparagine 90 and aspartate 106 each contribute to the shikimate site. Residues 130–134, 154–159, and methionine 217 contribute to the NADP(+) site; these read GAGGA and NRTFSK. Tyrosine 219 contributes to the shikimate binding site. Glycine 241 contributes to the NADP(+) binding site.

This sequence belongs to the shikimate dehydrogenase family. As to quaternary structure, homodimer.

The catalysed reaction is shikimate + NADP(+) = 3-dehydroshikimate + NADPH + H(+). It participates in metabolic intermediate biosynthesis; chorismate biosynthesis; chorismate from D-erythrose 4-phosphate and phosphoenolpyruvate: step 4/7. Functionally, involved in the biosynthesis of the chorismate, which leads to the biosynthesis of aromatic amino acids. Catalyzes the reversible NADPH linked reduction of 3-dehydroshikimate (DHSA) to yield shikimate (SA). This chain is Shikimate dehydrogenase (NADP(+)), found in Vibrio vulnificus (strain CMCP6).